Reading from the N-terminus, the 501-residue chain is Pre-mRNA-splicing factor 38B (501 aa).

A compositionally biased stretch (low complexity) spans 1 to 11; it reads MAGSQQQQQQQ. Disordered regions lie at residues 1–28 and 208–501; these read MAGS…LPLW and DQHM…ADSP. A compositionally biased stretch (basic residues) spans 243–273; that stretch reads GDKRRSRTPRRSPSPRKSQNRSRSRSHHRER. A coiled-coil region spans residues 281 to 302; it reads ELERERDRQRKEREGKDRDRDR. Positions 281 to 328 are enriched in basic and acidic residues; that stretch reads ELERERDRQRKEREGKDRDRDRDRDRERDRERDRDRRRSRTPDRNAER. Basic residues predominate over residues 329–341; that stretch reads RRSRSRERRRSRS. A compositionally biased stretch (basic and acidic residues) spans 342 to 408; the sequence is TSRDKRTERK…EEKKHREEKR (67 aa). Basic residues predominate over residues 409–435; sequence SKRSRSRSRDRKHKAERSSKKRSRSGS. Residues 437–447 are compositionally biased toward basic and acidic residues; that stretch reads SRQEAGEEKNR. Over residues 448-468 the composition is skewed to basic residues; sequence KRERSHSKDRQHKRSRSKERS. The span at 469–491 shows a compositional bias: basic and acidic residues; that stretch reads HRRESSNERIHARQERPSSESGE. Polar residues predominate over residues 492-501; that stretch reads RTNSVRADSP.

This sequence belongs to the PRP38 family.

The protein resides in the nucleus. Its function is as follows. May be required for pre-mRNA splicing. This chain is Pre-mRNA-splicing factor 38B (prpf38b), found in Danio rerio (Zebrafish).